Reading from the N-terminus, the 278-residue chain is Soluble NSF attachment protein homolog FPV011 (278 aa).

It belongs to the SNAP family.

The chain is Soluble NSF attachment protein homolog FPV011 from Fowlpox virus (strain NVSL) (FPV).